The following is a 156-amino-acid chain: Transcriptional repressor NrdR (156 aa).

Residues 3-34 fold into a zinc finger; the sequence is CPSCQFNGTRVVDSRPVDDNKEIRRRRECESC. Positions 49–139 constitute an ATP-cone domain; the sequence is LVVVKKEGSR…VYRQFKDINV (91 aa).

This sequence belongs to the NrdR family. It depends on Zn(2+) as a cofactor.

Functionally, negatively regulates transcription of bacterial ribonucleotide reductase nrd genes and operons by binding to NrdR-boxes. In Lysinibacillus sphaericus (strain C3-41), this protein is Transcriptional repressor NrdR.